A 262-amino-acid chain; its full sequence is Indole-3-glycerol phosphate synthase (262 aa).

It belongs to the TrpC family.

The catalysed reaction is 1-(2-carboxyphenylamino)-1-deoxy-D-ribulose 5-phosphate + H(+) = (1S,2R)-1-C-(indol-3-yl)glycerol 3-phosphate + CO2 + H2O. It functions in the pathway amino-acid biosynthesis; L-tryptophan biosynthesis; L-tryptophan from chorismate: step 4/5. This is Indole-3-glycerol phosphate synthase from Bordetella avium (strain 197N).